The following is a 173-amino-acid chain: Small ribosomal subunit protein uS5 (173 aa).

Residues 18 to 81 (LREKMIAVNR…EQARRGMFKV (64 aa)) form the S5 DRBM domain.

It belongs to the universal ribosomal protein uS5 family. In terms of assembly, part of the 30S ribosomal subunit. Contacts proteins S4 and S8.

Its function is as follows. With S4 and S12 plays an important role in translational accuracy. In terms of biological role, located at the back of the 30S subunit body where it stabilizes the conformation of the head with respect to the body. The polypeptide is Small ribosomal subunit protein uS5 (Bordetella avium (strain 197N)).